The sequence spans 185 residues: Large ribosomal subunit protein uL22 (185 aa).

This sequence belongs to the universal ribosomal protein uL22 family. Part of the 50S ribosomal subunit.

Its function is as follows. This protein binds specifically to 23S rRNA. It makes multiple contacts with different domains of the 23S rRNA in the assembled 50S subunit and ribosome. In terms of biological role, the globular domain of the protein is located near the polypeptide exit tunnel on the outside of the subunit, while an extended beta-hairpin is found that lines the wall of the exit tunnel in the center of the 70S ribosome. This Pyrobaculum islandicum (strain DSM 4184 / JCM 9189 / GEO3) protein is Large ribosomal subunit protein uL22.